Consider the following 275-residue polypeptide: Diaminopimelate epimerase (275 aa).

The substrate site is built by asparagine 13, glutamine 46, and asparagine 66. Cysteine 75 (proton donor) is an active-site residue. Substrate contacts are provided by residues 76–77, asparagine 159, asparagine 192, and 210–211; these read GN and ER. Cysteine 219 functions as the Proton acceptor in the catalytic mechanism. Substrate is bound at residue 220–221; sequence GS.

This sequence belongs to the diaminopimelate epimerase family. As to quaternary structure, homodimer.

The protein resides in the cytoplasm. The enzyme catalyses (2S,6S)-2,6-diaminopimelate = meso-2,6-diaminopimelate. It participates in amino-acid biosynthesis; L-lysine biosynthesis via DAP pathway; DL-2,6-diaminopimelate from LL-2,6-diaminopimelate: step 1/1. In terms of biological role, catalyzes the stereoinversion of LL-2,6-diaminopimelate (L,L-DAP) to meso-diaminopimelate (meso-DAP), a precursor of L-lysine and an essential component of the bacterial peptidoglycan. The protein is Diaminopimelate epimerase of Idiomarina loihiensis (strain ATCC BAA-735 / DSM 15497 / L2-TR).